Here is a 485-residue protein sequence, read N- to C-terminus: D-alanine--D-alanyl carrier protein ligase (485 aa).

144–145 lines the ATP pocket; it reads TS. Residue Asp189 coordinates D-alanine. 284-289 provides a ligand contact to ATP; that stretch reads NTYGPT. D-alanine is bound at residue Val293. ATP-binding residues include Asp365 and Lys473. Position 473 (Lys473) interacts with D-alanine.

It belongs to the ATP-dependent AMP-binding enzyme family. DltA subfamily.

It is found in the cytoplasm. It carries out the reaction holo-[D-alanyl-carrier protein] + D-alanine + ATP = D-alanyl-[D-alanyl-carrier protein] + AMP + diphosphate. It participates in cell wall biogenesis; lipoteichoic acid biosynthesis. Catalyzes the first step in the D-alanylation of lipoteichoic acid (LTA), the activation of D-alanine and its transfer onto the D-alanyl carrier protein (Dcp) DltC. In an ATP-dependent two-step reaction, forms a high energy D-alanyl-AMP intermediate, followed by transfer of the D-alanyl residue as a thiol ester to the phosphopantheinyl prosthetic group of the Dcp. D-alanylation of LTA plays an important role in modulating the properties of the cell wall in Gram-positive bacteria, influencing the net charge of the cell wall. The protein is D-alanine--D-alanyl carrier protein ligase of Staphylococcus epidermidis (strain ATCC 35984 / DSM 28319 / BCRC 17069 / CCUG 31568 / BM 3577 / RP62A).